The following is a 266-amino-acid chain: UPF0246 protein Pcryo_0542 (266 aa).

The protein belongs to the UPF0246 family.

This is UPF0246 protein Pcryo_0542 from Psychrobacter cryohalolentis (strain ATCC BAA-1226 / DSM 17306 / VKM B-2378 / K5).